The primary structure comprises 583 residues: 2-succinyl-5-enolpyruvyl-6-hydroxy-3-cyclohexene-1-carboxylate synthase (583 aa).

This sequence belongs to the TPP enzyme family. MenD subfamily. In terms of assembly, homodimer. The cofactor is Mg(2+). Mn(2+) serves as cofactor. Requires thiamine diphosphate as cofactor.

It catalyses the reaction isochorismate + 2-oxoglutarate + H(+) = 5-enolpyruvoyl-6-hydroxy-2-succinyl-cyclohex-3-ene-1-carboxylate + CO2. The protein operates within quinol/quinone metabolism; 1,4-dihydroxy-2-naphthoate biosynthesis; 1,4-dihydroxy-2-naphthoate from chorismate: step 2/7. It participates in quinol/quinone metabolism; menaquinone biosynthesis. Its function is as follows. Catalyzes the thiamine diphosphate-dependent decarboxylation of 2-oxoglutarate and the subsequent addition of the resulting succinic semialdehyde-thiamine pyrophosphate anion to isochorismate to yield 2-succinyl-5-enolpyruvyl-6-hydroxy-3-cyclohexene-1-carboxylate (SEPHCHC). This Chlorobium luteolum (strain DSM 273 / BCRC 81028 / 2530) (Pelodictyon luteolum) protein is 2-succinyl-5-enolpyruvyl-6-hydroxy-3-cyclohexene-1-carboxylate synthase.